The chain runs to 507 residues: Cytochrome P450 monooxygenase ptmU (507 aa).

A helical membrane pass occupies residues 4–24 (VNAWWVGGSLLLGIWAIVVFF). 3 N-linked (GlcNAc...) asparagine glycosylation sites follow: N98, N202, and N398. C444 is a heme binding site.

This sequence belongs to the cytochrome P450 family. Requires heme as cofactor.

It is found in the membrane. It functions in the pathway secondary metabolite biosynthesis. Cytochrome P450 monooxygenase; part of the gene cluster that mediates the biosynthesis of the indole diterpenes penitrems. The geranylgeranyl diphosphate (GGPP) synthase ptmG catalyzes the first step in penitrem biosynthesis via conversion of farnesyl pyrophosphate and isopentyl pyrophosphate into geranylgeranyl pyrophosphate (GGPP). Condensation of indole-3-glycerol phosphate with GGPP by the prenyl transferase ptmC then forms 3-geranylgeranylindole (3-GGI). Epoxidation by the FAD-dependent monooxygenase ptmM leads to a epoxidized-GGI that is substrate of the terpene cyclase ptmB for cyclization to yield paspaline. Paspaline is subsequently converted to 13-desoxypaxilline by the cytochrome P450 monooxygenase ptmP, the latter being then converted to paxilline by the cytochrome P450 monooxygenase ptmQ. Paxilline is converted to beta-paxitriol via C-10 ketoreduction by the short-chain dehydrogenase ptmH which can be monoprenylated at the C-20 by the indole diterpene prenyltransferase ptmD. A two-step elimination (acetylation and elimination) process performed by the O-acetyltransferase ptmV and ptmI leads to the production of the prenylated form of penijanthine. The FAD-linked oxidoreductase ptmO then converts the prenylated form of penijanthine into PC-M5 which is in turn transformed into PC-M4 by the aromatic dimethylallyltransferase ptmE. Five sequential oxidative transformations performed by the cytochrome P450 monooxygenases ptmK, ptmU, ptmL, ptmN and ptmJ yield the various penitrem compounds. PtmK, ptmU and ptmM are involved in the formation of the key bicyclic ring of penitrem C via the formation of the intermediates secopenitrem D and penitrem D. PtmL catalyzes the epoxidation of penitrem D and C to yield penitrem B and F, respectively. PtmJ catalyzes the last benzylic hydroxylation to convert penitrem B to prenitrem E and penitrem F to penitrem A. The sequence is that of Cytochrome P450 monooxygenase ptmU from Penicillium ochrochloron.